We begin with the raw amino-acid sequence, 309 residues long: Ribonuclease Z (309 aa).

The Zn(2+) site is built by His63, His65, Asp67, His68, His145, Asp216, and His274. The Proton acceptor role is filled by Asp67.

This sequence belongs to the RNase Z family. As to quaternary structure, homodimer. It depends on Zn(2+) as a cofactor.

The enzyme catalyses Endonucleolytic cleavage of RNA, removing extra 3' nucleotides from tRNA precursor, generating 3' termini of tRNAs. A 3'-hydroxy group is left at the tRNA terminus and a 5'-phosphoryl group is left at the trailer molecule.. Functionally, zinc phosphodiesterase, which displays some tRNA 3'-processing endonuclease activity. Probably involved in tRNA maturation, by removing a 3'-trailer from precursor tRNA. This Streptococcus sanguinis (strain SK36) protein is Ribonuclease Z.